A 1149-amino-acid chain; its full sequence is DNA-directed RNA polymerase III subunit RPC2 (1149 aa).

Zn(2+) contacts are provided by cysteine 1095, cysteine 1098, cysteine 1107, and cysteine 1110. The C4-type zinc finger occupies 1095–1110; the sequence is CDKCGLMGYSGWCTTC.

The protein belongs to the RNA polymerase beta chain family. As to quaternary structure, component of the RNA polymerase III (Pol III) complex consisting of 17 subunits.

It localises to the nucleus. It carries out the reaction RNA(n) + a ribonucleoside 5'-triphosphate = RNA(n+1) + diphosphate. In terms of biological role, DNA-dependent RNA polymerase catalyzes the transcription of DNA into RNA using the four ribonucleoside triphosphates as substrates. Second largest core component of RNA polymerase III which synthesizes small RNAs, such as 5S rRNA and tRNAs. Proposed to contribute to the polymerase catalytic activity and forms the polymerase active center together with the largest subunit. Pol III is composed of mobile elements and RPC2 is part of the core element with the central large cleft and probably a clamp element that moves to open and close the cleft. The chain is DNA-directed RNA polymerase III subunit RPC2 (RET1) from Saccharomyces cerevisiae (strain ATCC 204508 / S288c) (Baker's yeast).